A 131-amino-acid chain; its full sequence is Hypocretin neuropeptide precursor (131 aa).

Positions methionine 1–alanine 33 are cleaved as a signal peptide. Glutamine 34 carries the pyrrolidone carboxylic acid modification. 2 disulfides stabilise this stretch: cysteine 39–cysteine 45 and cysteine 40–cysteine 47. At leucine 66 the chain carries Leucine amide. Methionine 97 is subject to Methionine amide. The propeptide at glycine 98–isoleucine 131 is removed in mature form.

It belongs to the orexin family. Post-translationally, specific enzymatic cleavages at paired basic residues yield the different active peptides. In terms of tissue distribution, abundantly expressed in subthalamic nucleus but undetectable in other brain regions tested (hypothalamus was not tested) and in heart, placenta, lung, liver, skeletal muscle, kidney and pancreas.

It is found in the rough endoplasmic reticulum. It localises to the cytoplasmic vesicle. The protein localises to the synapse. Functionally, neuropeptides that play a significant role in the regulation of food intake and sleep-wakefulness, possibly by coordinating the complex behavioral and physiologic responses of these complementary homeostatic functions. A broader role in the homeostatic regulation of energy metabolism, autonomic function, hormonal balance and the regulation of body fluids, is also suggested. In terms of biological role, binds to orexin receptors HCRTR1/OX1R and HCRTR2/OX2R with a high affinity. Stimulates food intake. Modulates pituitary luteinizing hormone secretion in an ovarian steroid-dependent manner. Binds to orexin receptor HCRTR2/OX2R only. Stimulates food intake. Modulates pituitary luteinizing hormone secretion in an ovarian steroid-dependent manner. This Homo sapiens (Human) protein is Hypocretin neuropeptide precursor.